Here is a 147-residue protein sequence, read N- to C-terminus: Large ribosomal subunit protein uL15 (147 aa).

Residues 1-11 (MKLHDLRPAKD) show a composition bias toward basic and acidic residues. The tract at residues 1–57 (MKLHDLRPAKDAKKKRKRVGRGTGSGRGFTSGRGSKGQNARSGGGVRPTFEGGQTPL) is disordered. Positions 21–35 (RGTGSGRGFTSGRGS) are enriched in gly residues.

The protein belongs to the universal ribosomal protein uL15 family. Part of the 50S ribosomal subunit.

Binds to the 23S rRNA. This is Large ribosomal subunit protein uL15 from Halothermothrix orenii (strain H 168 / OCM 544 / DSM 9562).